Reading from the N-terminus, the 273-residue chain is HMP-PP phosphatase (273 aa).

The Nucleophile role is filled by aspartate 8. 3 residues coordinate Mg(2+): aspartate 8, aspartate 10, and aspartate 212.

Belongs to the HAD-like hydrolase superfamily. Cof family. Mg(2+) serves as cofactor.

The enzyme catalyses 4-amino-2-methyl-5-(diphosphooxymethyl)pyrimidine + H2O = 4-amino-2-methyl-5-(phosphooxymethyl)pyrimidine + phosphate + H(+). In terms of biological role, catalyzes the hydrolysis of 4-amino-2-methyl-5-hydroxymethylpyrimidine pyrophosphate (HMP-PP) to 4-amino-2-methyl-5-hydroxymethylpyrimidine phosphate (HMP-P). This Yersinia pseudotuberculosis serotype I (strain IP32953) protein is HMP-PP phosphatase.